The primary structure comprises 215 residues: uncharacterized protein (215 aa).

The first 17 residues, Met-1–Gly-17, serve as a signal peptide directing secretion. Positions Gly-17–Asn-110 are disordered. Cys-18 carries N-palmitoyl cysteine lipidation. A lipid anchor (S-diacylglycerol cysteine) is attached at Cys-18. The segment covering Glu-25–Asn-62 has biased composition (basic and acidic residues). 2 stretches are compositionally biased toward low complexity: residues Gln-63 to Asn-76 and Asn-91 to Asn-110.

It localises to the cell membrane. This is an uncharacterized protein from Staphylococcus epidermidis (strain ATCC 35984 / DSM 28319 / BCRC 17069 / CCUG 31568 / BM 3577 / RP62A).